The chain runs to 131 residues: MCGIYPYQLVTSSASPKTDVFVSSLPTSPPQALGAASVMALQLVFKNCTISLFISLNSNRKASWPSGDSIFSNCDFGMCSAKNSCSEYVNSPSDWIPMIRDGCWMVERTSVMSSTLSLAKSCVSSLRVMAM.

This is an uncharacterized protein from Saccharomyces cerevisiae (strain ATCC 204508 / S288c) (Baker's yeast).